Here is a 446-residue protein sequence, read N- to C-terminus: Exodeoxyribonuclease 7 large subunit (446 aa).

Belongs to the XseA family. Heterooligomer composed of large and small subunits.

The protein resides in the cytoplasm. It carries out the reaction Exonucleolytic cleavage in either 5'- to 3'- or 3'- to 5'-direction to yield nucleoside 5'-phosphates.. Its function is as follows. Bidirectionally degrades single-stranded DNA into large acid-insoluble oligonucleotides, which are then degraded further into small acid-soluble oligonucleotides. This Streptococcus agalactiae serotype Ia (strain ATCC 27591 / A909 / CDC SS700) protein is Exodeoxyribonuclease 7 large subunit.